We begin with the raw amino-acid sequence, 98 residues long: Cell division topological specificity factor (98 aa).

The protein belongs to the MinE family.

Prevents the cell division inhibition by proteins MinC and MinD at internal division sites while permitting inhibition at polar sites. This ensures cell division at the proper site by restricting the formation of a division septum at the midpoint of the long axis of the cell. This Methylorubrum populi (strain ATCC BAA-705 / NCIMB 13946 / BJ001) (Methylobacterium populi) protein is Cell division topological specificity factor.